The following is a 780-amino-acid chain: Acetyl-CoA decarbonylase/synthase complex subunit alpha (780 aa).

[4Fe-4S] cluster is bound by residues cysteine 73, cysteine 76, cysteine 77, cysteine 79, cysteine 84, and cysteine 93. Histidine 116 provides a ligand contact to CO. 3 residues coordinate [Ni-4Fe-4S] cluster: histidine 250, cysteine 278, and cysteine 317. 4Fe-4S ferredoxin-type domains follow at residues 399–429 (IDEI…MDAV) and 440–469 (LEEM…VSMV). [4Fe-4S] cluster is bound by residues cysteine 409, cysteine 412, cysteine 415, cysteine 419, cysteine 449, cysteine 452, cysteine 455, and cysteine 459. Residues cysteine 517, cysteine 546, and cysteine 581 each contribute to the [Ni-4Fe-4S] cluster site.

The protein belongs to the Ni-containing carbon monoxide dehydrogenase family. Heterotetramer of two alpha and two epsilon subunits. The ACDS complex is made up of alpha, epsilon, beta, gamma and delta subunits with a probable stoichiometry of (alpha(2)epsilon(2))(4)-beta(8)-(gamma(1)delta(1))(8). Requires [4Fe-4S] cluster as cofactor. [Ni-4Fe-4S] cluster is required as a cofactor.

It carries out the reaction CO + 2 oxidized [2Fe-2S]-[ferredoxin] + H2O = 2 reduced [2Fe-2S]-[ferredoxin] + CO2 + 2 H(+). Part of the ACDS complex that catalyzes the reversible cleavage of acetyl-CoA, allowing autotrophic growth from CO(2). The alpha-epsilon subcomponent functions as a carbon monoxide dehydrogenase. In Methanothermobacter thermautotrophicus (strain ATCC 29096 / DSM 1053 / JCM 10044 / NBRC 100330 / Delta H) (Methanobacterium thermoautotrophicum), this protein is Acetyl-CoA decarbonylase/synthase complex subunit alpha.